The following is a 150-amino-acid chain: 6,7-dimethyl-8-ribityllumazine synthase (150 aa).

5-amino-6-(D-ribitylamino)uracil contacts are provided by residues F11, 42–44 (IFE), and 73–75 (CAI). Residue 78–79 (ES) coordinates (2S)-2-hydroxy-3-oxobutyl phosphate. The active-site Proton donor is the H81. 5-amino-6-(D-ribitylamino)uracil is bound at residue N106. R120 is a (2S)-2-hydroxy-3-oxobutyl phosphate binding site.

It belongs to the DMRL synthase family.

The catalysed reaction is (2S)-2-hydroxy-3-oxobutyl phosphate + 5-amino-6-(D-ribitylamino)uracil = 6,7-dimethyl-8-(1-D-ribityl)lumazine + phosphate + 2 H2O + H(+). The protein operates within cofactor biosynthesis; riboflavin biosynthesis; riboflavin from 2-hydroxy-3-oxobutyl phosphate and 5-amino-6-(D-ribitylamino)uracil: step 1/2. In terms of biological role, catalyzes the formation of 6,7-dimethyl-8-ribityllumazine by condensation of 5-amino-6-(D-ribitylamino)uracil with 3,4-dihydroxy-2-butanone 4-phosphate. This is the penultimate step in the biosynthesis of riboflavin. This chain is 6,7-dimethyl-8-ribityllumazine synthase, found in Paramagnetospirillum magneticum (strain ATCC 700264 / AMB-1) (Magnetospirillum magneticum).